The primary structure comprises 151 residues: Ribonuclease H (151 aa).

In terms of domain architecture, RNase H type-1 spans 1-143; sequence MYKKIEIFTD…CDQLARLAAK (143 aa). Positions 10, 48, 70, and 135 each coordinate Mg(2+).

Belongs to the RNase H family. In terms of assembly, monomer. Mg(2+) serves as cofactor.

The protein resides in the cytoplasm. It carries out the reaction Endonucleolytic cleavage to 5'-phosphomonoester.. In terms of biological role, endonuclease that specifically degrades the RNA of RNA-DNA hybrids. The chain is Ribonuclease H from Blochmanniella pennsylvanica (strain BPEN).